Here is an 862-residue protein sequence, read N- to C-terminus: Kinesin-like protein KIN-7E (862 aa).

A Kinesin motor domain is found at 24–346 (KILVLVRLRP…LLFACCAKEV (323 aa)). Position 110–117 (110–117 (GQTSSGKT)) interacts with ATP. Residues 355–428 (VMSDKALVKQ…RLEDFMKMVE (74 aa)) adopt a coiled-coil conformation. Disordered stretches follow at residues 463–505 (RTSF…QSEE) and 542–632 (ANGE…TPLV). Residues 465–476 (SFISDGTSTPLS) show a composition bias toward polar residues. Over residues 494 to 505 (MSPRHSGDQSEE) the composition is skewed to basic and acidic residues. Polar residues predominate over residues 612-621 (DSMTSRGSDS). A Glycyl lysine isopeptide (Lys-Gly) (interchain with G-Cter in ubiquitin) cross-link involves residue Lys734.

It belongs to the TRAFAC class myosin-kinesin ATPase superfamily. Kinesin family. KIN-7 subfamily.

This Arabidopsis thaliana (Mouse-ear cress) protein is Kinesin-like protein KIN-7E.